Here is a 158-residue protein sequence, read N- to C-terminus: Na(+)/H(+) antiporter subunit E (158 aa).

2 helical membrane-spanning segments follow: residues 22–41 (YTAVDFLIGYVVGIFILFVL) and 54–76 (IWAIIKLISLFFKELILANIDVI).

Belongs to the CPA3 antiporters (TC 2.A.63) subunit E family. Forms a heterooligomeric complex that consists of seven subunits: MrpA, MrpB, MrpC, MrpD, MrpE, MrpF and MrpG.

It localises to the cell membrane. Mnh complex is a Na(+)Li(+)/H(+) antiporter involved in Na(+) and/or Li(+) excretion and Na(+) resistance. Na(+)/H(+) antiport consumes a transmembrane electrical potential, and is thus inferred to be electrogenic. Does not transport K(+), Ca(2+) or Mg(2+). Its function is as follows. Mrp complex is a Na(+)/H(+) antiporter involved in Na(+) excretion and Na(+) resistance. The polypeptide is Na(+)/H(+) antiporter subunit E (mrpE) (Alkalihalophilus pseudofirmus (strain ATCC BAA-2126 / JCM 17055 / OF4) (Bacillus pseudofirmus)).